Here is a 120-residue protein sequence, read N- to C-terminus: Spermidine export protein MdtJ (120 aa).

The next 4 membrane-spanning stretches (helical) occupy residues 1–21, 31–51, 54–74, and 81–101; these read MFYWILLALAIIAEITGTLSM, TGFILMLAMIALSYIFLAFAV, IALGVAYALWEGIGILLITLF, and ESLSLLKIAGLTTLVIGIVLI.

It belongs to the drug/metabolite transporter (DMT) superfamily. Small multidrug resistance (SMR) (TC 2.A.7.1) family. MdtJ subfamily. In terms of assembly, forms a complex with MdtI.

It is found in the cell inner membrane. Catalyzes the excretion of spermidine. The chain is Spermidine export protein MdtJ from Klebsiella pneumoniae subsp. pneumoniae (strain ATCC 700721 / MGH 78578).